Here is a 343-residue protein sequence, read N- to C-terminus: Calcium/calmodulin-dependent protein kinase type 1B (343 aa).

The region spanning 15–270 (YEIREKLGSG…CQQALQHLWI (256 aa)) is the Protein kinase domain. Residues 21 to 29 (LGSGAFSEV) and Lys-44 contribute to the ATP site. The active-site Proton acceptor is the Asp-136. A calmodulin-binding region spans residues 290 to 311 (KNFARTHWKRAFNATSFLRHIR). A disordered region spans residues 314–343 (GQSPEGEEASRQGMTRHSHPGLGTSQSPKW). Residue Ser-338 is modified to Phosphoserine.

It belongs to the protein kinase superfamily. CAMK Ser/Thr protein kinase family. CaMK subfamily. Isoform 1 and isoform 2 are phosphorylated by CAMKK1. Isoform 1 is expressed in liver, heart, lung, kidney, spleen and testis. Isoform 2 is predominantly expressed in cerebrum and cerebellum.

Its subcellular location is the cytoplasm. The protein localises to the nucleus. It catalyses the reaction L-seryl-[protein] + ATP = O-phospho-L-seryl-[protein] + ADP + H(+). The enzyme catalyses L-threonyl-[protein] + ATP = O-phospho-L-threonyl-[protein] + ADP + H(+). With respect to regulation, activated by Ca(2+)/calmodulin. Must be phosphorylated to be maximally active. Activated by CAMKK1. Its function is as follows. Calcium/calmodulin-dependent protein kinase belonging to a proposed calcium-triggered signaling cascade. In vitro, isoform 1 and isoform 2 phosphorylate CREB1, SYN1/synapsin I. Phosphorylates and activates CAMK1. The polypeptide is Calcium/calmodulin-dependent protein kinase type 1B (Pnck) (Rattus norvegicus (Rat)).